The sequence spans 417 residues: Tyrosine--tRNA ligase (417 aa).

An L-tyrosine-binding site is contributed by Tyr40. A 'HIGH' region motif is present at residues 45–54 (ATAASLHVGH). L-tyrosine is bound by residues Tyr177 and Gln181. Residues 237 to 241 (KMGKS) carry the 'KMSKS' region motif. Lys240 serves as a coordination point for ATP. In terms of domain architecture, S4 RNA-binding spans 351–414 (ISVVQLITRS…AGRKRHALIK (64 aa)).

Belongs to the class-I aminoacyl-tRNA synthetase family. TyrS type 1 subfamily. In terms of assembly, homodimer.

The protein localises to the cytoplasm. The catalysed reaction is tRNA(Tyr) + L-tyrosine + ATP = L-tyrosyl-tRNA(Tyr) + AMP + diphosphate + H(+). Catalyzes the attachment of tyrosine to tRNA(Tyr) in a two-step reaction: tyrosine is first activated by ATP to form Tyr-AMP and then transferred to the acceptor end of tRNA(Tyr). This is Tyrosine--tRNA ligase from Dinoroseobacter shibae (strain DSM 16493 / NCIMB 14021 / DFL 12).